Here is a 111-residue protein sequence, read N- to C-terminus: Small ribosomal subunit protein uS10 (111 aa).

It belongs to the universal ribosomal protein uS10 family. In terms of assembly, part of the 30S ribosomal subunit.

Its function is as follows. Involved in the binding of tRNA to the ribosomes. This Ehrlichia ruminantium (strain Welgevonden) protein is Small ribosomal subunit protein uS10.